The sequence spans 41 residues: Large ribosomal subunit protein bL36 (41 aa).

The protein belongs to the bacterial ribosomal protein bL36 family.

This Bartonella henselae (strain ATCC 49882 / DSM 28221 / CCUG 30454 / Houston 1) (Rochalimaea henselae) protein is Large ribosomal subunit protein bL36.